We begin with the raw amino-acid sequence, 1881 residues long: Ankyrin-1 (1881 aa).

The interval 1-827 (MPYSVGFREA…EDEGEELISF (827 aa)) is 89 kDa domain. ANK repeat units lie at residues 44 to 73 (NGLN…ILET), 77 to 106 (KGNT…NVNA), 110 to 139 (KGFT…NQNV), 143 to 172 (DGFT…KGKV), 174 to 201 (LPAL…NPDV), 205 to 234 (TGFT…SVNF), 238 to 267 (NGIT…QIET), 271 to 300 (DELT…PIQA), 304 to 333 (NGLS…EIDD), 337 to 366 (DHLT…KPNS), 370 to 399 (NGFT…SIDA), 403 to 432 (SGLT…SPNV), 436 to 465 (KVET…KVNA), 469 to 498 (DDQT…NPNL), 502 to 531 (AGHT…SQAC), 535 to 564 (KGFT…HPNA), 568 to 597 (NGLT…SPHS), 601 to 630 (NGYT…SANA), 634 to 663 (QGVT…NGNL), 667 to 696 (SGLT…MVDA), 700 to 729 (MGYT…DVNA), 733 to 762 (LGYS…SPNE), and 766 to 795 (DGTT…ETSF). (3S)-3-hydroxyasparagine; by HIF1AN; partial is present on Asn105. Asn233 bears the (3S)-3-hydroxyasparagine; by HIF1AN; partial mark. Ser429 carries the phosphoserine modification. (3S)-3-hydroxyasparagine; by HIF1AN; partial occurs at positions 431 and 464. 2 positions are modified to (3S)-3-hydroxyasparagine; by HIF1AN; partial: Asn629 and Asn662. Asp695 carries the post-translational modification (3S)-3-hydroxyaspartate; by HIF1AN; partial. Asn728 is modified ((3S)-3-hydroxyasparagine; by HIF1AN; partial). Residue Ser759 is modified to Phosphoserine. Position 761 is a (3S)-3-hydroxyasparagine; by HIF1AN; partial (Asn761). 4 positions are modified to phosphoserine: Ser781, Ser817, Ser834, and Ser856. Residues 875-904 (EEQEQASKEYDEDSLIPSSPATETSDNISP) are disordered. Positions 890–904 (IPSSPATETSDNISP) are enriched in polar residues. 2 ZU5 domains span residues 913 to 1068 (FLVS…IMSR) and 1070 to 1216 (CQDY…LSDC). A Phosphothreonine modification is found at Thr961. Residue Tyr1073 is modified to Phosphotyrosine. The residue at position 1082 (Ser1082) is a Phosphoserine. The interval 1234-1362 (TAVPYMAKFV…QHILCHLNIT (129 aa)) is UPA domain. Phosphothreonine is present on residues Thr1378 and Thr1380. The 55 kDa regulatory domain stretch occupies residues 1383–1881 (ALRYSILSES…SKDHTSTPNP (499 aa)). A phosphoserine mark is found at Ser1390, Ser1392, and Ser1396. Residue Thr1400 is modified to Phosphothreonine. A Death domain is found at 1403–1487 (AEMKMAVISE…EIVNMLEGSG (85 aa)). Phosphoserine is present on residues Ser1428 and Ser1486. Residues 1486–1510 (SGRQSRNLKPDRRHTDRDYSLSPSQ) form a disordered region. Positions 1493 to 1504 (LKPDRRHTDRDY) are enriched in basic and acidic residues. Phosphoserine occurs at positions 1523 and 1533. The tract at residues 1583 to 1613 (SSLECSKAEDSDATGHEWKLEGALSEEPRGP) is disordered. Basic and acidic residues predominate over residues 1588 to 1612 (SKAEDSDATGHEWKLEGALSEEPRG). A Phosphoserine modification is found at Ser1617. Disordered regions lie at residues 1637 to 1703 (LLEQ…LQDW), 1718 to 1791 (QGSW…EAKN), and 1840 to 1859 (ADAA…EDPS). The segment covering 1642-1658 (EGQRSEEKLPGSKRQDD) has biased composition (basic and acidic residues). A phosphoserine mark is found at Ser1666, Ser1671, Ser1686, Ser1690, and Ser1696. Residues 1683–1694 (ITHSPTVSQVTE) are compositionally biased toward polar residues. 2 stretches are compositionally biased toward polar residues: residues 1718–1739 (QGSW…STMT) and 1758–1771 (SEHT…AESS). Basic and acidic residues predominate over residues 1772-1781 (QADRDRRQQG).

As to quaternary structure, component of the ankyrin-1 complex in the erythrocyte, composed of ANK1, RHCE, RHAG, SLC4A1, EPB42, GYPA, GYPB and AQP1. Interacts with a number of integral membrane proteins and cytoskeletal proteins. Interacts (via N-terminus) with SPTB/spectrin (beta chain). Also interacts with TTN/titin. Isoform Mu17 interacts with OBSCN isoform 3/obscurin. Interacts with HIF1AN. Interacts (via ANK 1-5 repeats) with RHCE; this interaction mediates the primary membrane attachment site for ANK1. Interacts (via ANK 1-2 repeats) with AQP1 (via the N-terminal). Interacts (via ANK 1-13 repeats) with EPB42. Interacts directly with SLC4A1 (via the cytoplasmic domain); this interaction is mediated by the SLC4A1 Band 3-II and Band 3-III dimers. In terms of processing, regulated by phosphorylation. Post-translationally, palmitoylated. Hydroxylated by HIF1AN at several asparagine and 1 aspartate residue within ANK repeat region. Hydroxylation seems to increase the conformational stability of this region and may also modulate protein-protein interactions mediated by the ANK repeat region. In terms of processing, (Microbial infection) Probably cleaved by P.falciparum SERA6; the cleavage probably causes the disruption of the actin cytoskeleton and the rupture of the erythrocyte cell membrane releasing the merozoites. As to expression, isoform Mu17, isoform Mu18, isoform Mu19 and isoform Mu20 are expressed in skeletal muscle. Isoform Br21 is expressed in brain.

The protein localises to the cytoplasm. It localises to the cytoskeleton. It is found in the membrane. The protein resides in the myofibril. Its subcellular location is the sarcomere. The protein localises to the m line. It localises to the sarcoplasmic reticulum. Functionally, component of the ankyrin-1 complex, a multiprotein complex involved in the stability and shape of the erythrocyte membrane. Attaches integral membrane proteins to cytoskeletal elements; binds to the erythrocyte membrane protein band 4.2, to Na-K ATPase, to the lymphocyte membrane protein GP85, and to the cytoskeletal proteins fodrin, tubulin, vimentin and desmin. Erythrocyte ankyrins also link spectrin (beta chain) to the cytoplasmic domain of the erythrocytes anion exchange protein; they retain most or all of these binding functions. Together with obscurin in skeletal muscle may provide a molecular link between the sarcoplasmic reticulum and myofibrils. The polypeptide is Ankyrin-1 (Homo sapiens (Human)).